The sequence spans 818 residues: Serine/threonine-protein phosphatase 4 regulatory subunit 3 (818 aa).

A WH1 domain is found at 1-100 (MTDTRRRVKV…DEIWEKICQV (100 aa)). Residues 718 to 818 (LAKSSFSGRQ…PPSKKSRLSS (101 aa)) are disordered. Residues 721 to 730 (SSFSGRQNPS) show a composition bias toward polar residues. Positions 736–756 (SGSTKTSLSSPPPSASLSPGS) are enriched in low complexity. Residues 788-804 (YPDDDEEEEDDDDEESK) are compositionally biased toward acidic residues.

It belongs to the SMEK family. Serine/threonine-protein phosphatase 4 (PP4) occurs in different assemblies of the catalytic and one or more regulatory subunits.

In terms of biological role, regulatory subunit of serine/threonine-protein phosphatase 4. The protein is Serine/threonine-protein phosphatase 4 regulatory subunit 3 (smek1) of Tetraodon nigroviridis (Spotted green pufferfish).